The following is an 883-amino-acid chain: Receptor-like protein 40 (883 aa).

A signal peptide spans 1-21 (MSELLFSLNFLLLLLLSCVSP). Over 22–846 (SSFFTFNNPV…EDEQVLNWKA (825 aa)) the chain is Extracellular. 3 N-linked (GlcNAc...) asparagine glycosylation sites follow: Asn58, Asn91, and Asn109. LRR repeat units lie at residues 97-121 (FHHL…KFGM) and 122-143 (LNNL…PFSF). Asn145 carries an N-linked (GlcNAc...) asparagine glycan. LRR repeat units follow at residues 146–169 (LSML…ARNL), 170–195 (RKLR…LFEL), 197–219 (HIIY…EFGN), 220–244 (LNKL…ISNL), 246–267 (QLTE…VQNL), 268–291 (TKLS…LFTM), 293–316 (FLSY…SSSS), 317–340 (SRLE…ISKL), 342–364 (NLKE…LFSS), 365–390 (LKSL…SYIP), 391–412 (STLE…VFKT), 413–437 (LHNL…LWSL), 439–462 (RLSS…VLVN), and 463–486 (SSVQ…PLSI). Residues Asn189, Asn207, Asn243, and Asn266 are each glycosylated (N-linked (GlcNAc...) asparagine). N-linked (GlcNAc...) asparagine glycans are attached at residues Asn305 and Asn312. Asn352 carries N-linked (GlcNAc...) asparagine glycosylation. Residue Asn462 is glycosylated (N-linked (GlcNAc...) asparagine). The stretch at 487–506 (NYFSAIDNRFGGDIPLSICN) is one LRR 17; degenerate repeat. N-linked (GlcNAc...) asparagine glycosylation is found at Asn506 and Asn519. LRR repeat units lie at residues 507 to 528 (RSSL…PPCL), 529 to 552 (SNLL…YYED), 554 to 576 (PLRS…LINC), 578 to 600 (ALQF…LKAL), 601 to 624 (PKLQ…NEGP), 627 to 651 (FPEL…FFVN), 701 to 724 (TSSA…IGLL), 725 to 747 (KALI…SFAN), 748 to 772 (LKKM…LRTL), and 774 to 797 (FLAY…QITG). Residue Asn575 is glycosylated (N-linked (GlcNAc...) asparagine). Asn731 carries N-linked (GlcNAc...) asparagine glycosylation. A glycan (N-linked (GlcNAc...) asparagine) is linked at Asn779. Residues 847–867 (VAIGYGIGVLLGLAIAQLISL) form a helical membrane-spanning segment. Topologically, residues 868–883 (YKPKWLASLVIKSRNC) are cytoplasmic.

It belongs to the RLP family.

Its subcellular location is the cell membrane. This is Receptor-like protein 40 from Arabidopsis thaliana (Mouse-ear cress).